Reading from the N-terminus, the 115-residue chain is Hydrogenase maturation factor HypA (115 aa).

Histidine 2 serves as a coordination point for Ni(2+). Zn(2+) is bound by residues cysteine 73, cysteine 76, cysteine 89, and cysteine 92.

It belongs to the HypA/HybF family.

Its function is as follows. Involved in the maturation of [NiFe] hydrogenases. Required for nickel insertion into the metal center of the hydrogenase. In Nitrosospira multiformis (strain ATCC 25196 / NCIMB 11849 / C 71), this protein is Hydrogenase maturation factor HypA.